Here is a 284-residue protein sequence, read N- to C-terminus: L-ribulose-5-phosphate 3-epimerase UlaE (284 aa).

Belongs to the L-ribulose-5-phosphate 3-epimerase family.

It carries out the reaction L-ribulose 5-phosphate = L-xylulose 5-phosphate. It functions in the pathway cofactor degradation; L-ascorbate degradation; D-xylulose 5-phosphate from L-ascorbate: step 3/4. Functionally, catalyzes the isomerization of L-xylulose-5-phosphate to L-ribulose-5-phosphate. Is involved in the anaerobic L-ascorbate utilization. The chain is L-ribulose-5-phosphate 3-epimerase UlaE from Escherichia coli (strain 55989 / EAEC).